Here is a 270-residue protein sequence, read N- to C-terminus: Phosphonates import ATP-binding protein PhnC 1 (270 aa).

One can recognise an ABC transporter domain in the interval 2 to 245; the sequence is LVVEGLTCRF…IARELYDLEA (244 aa). 34-41 serves as a coordination point for ATP; sequence GRSGAGKS.

It belongs to the ABC transporter superfamily. Phosphonates importer (TC 3.A.1.9.1) family. The complex is composed of two ATP-binding proteins (PhnC), two transmembrane proteins (PhnE) and a solute-binding protein (PhnD).

It localises to the cell inner membrane. The catalysed reaction is phosphonate(out) + ATP + H2O = phosphonate(in) + ADP + phosphate + H(+). Functionally, part of the ABC transporter complex PhnCDE involved in phosphonates import. Responsible for energy coupling to the transport system. This Rhodopseudomonas palustris (strain ATCC BAA-98 / CGA009) protein is Phosphonates import ATP-binding protein PhnC 1.